The chain runs to 1982 residues: MASEEENDDNFQEEEEAQEDNAPAAELSNDSDAPLKPNNDEDDDYDPEDSRRKKKGKKRKTRKGEEKGRKKKKRKKNESEEDSDFVQHDEEVEYPSTSKRGRKRKEEKQAAKEKESASSGMPSVEDVCSAFSVCNVEIEYSEEELQSLTTYKAFMHHVRPILQKENPKIAAPKLVMLVAAKWREFCESNPHIQQEGGAAGSGGSAGQARSVTGDEPEEPRSSRSSRNEKPDDIYEEAVEEEEEEEEEEKKPRRKRSGRGKKGRRPSGKVPTLKIKLLGKRKRDSSDEEQDASGASERDSDLEFERMLQKSDDSADEKEAPVSSKADNSAPAAQDDGSGAPVVRKKAKTKIGNKFKKKNKLKKTKNFPEGEDGEHEHQDYCEVCQQGGEIILCDTCPRAYHLVCLEPELDEPPEGKWSCPHCEADGGAAEEEDDDEHQEFCRVCKDGGELLCCDSCPSAYHTFCLNPPLDTIPDGDWRCPRCSCPPLTGKAEKIITWRWAQRSNDDGPSTSKGSKNSNSRVREYFIKWHNMSYWHCEWVPEVQLDVHHPLMIRSFQRKYDMEEPPKFEESLDEADTRYKRIQRHKDKVGMKANDDAEVLEERFYKNGVKPEWLIVQRVINHRTARDGSTMYLVKWRELPYDKSTWEEEGDDIQGLRQAIDYYQDLRAVCTSETTQSRSKKSKKGRKSKLKVEDDEDRPVKHYTPPPEKPTTDLKKKYEDQPAFLEGTGMQLHPYQIEGINWLRYSWGQGIDTILADEMGLGKTIQTVTFLYSLYKEGHCRGPFLVAVPLSTLVNWEREFELWAPDFYCITYIGDKDSRAVIRENELSFEEGAIRGSKVSRLRTTQYKFNVLLTSYELISMDAACLGSIDWAVLVVDEAHRLKSNQSKFFRILNSYTIAYKLLLTGTPLQNNLEELFHLLNFLSRDKFNDLQAFQGEFADVSKEEQVKRLHEMLGPHMLRRLKTDVLKNMPSKSEFIVRVELSAMQKKFYKFILTKNYEALNSKSGGGSCSLINIMMDLKKCCNHPYLFPSAAEEATTAAGGLYEINSLTKAAGKLVLLSKMLKQLKAQNHRVLIFSQMTKMLDILEDFLEGEQYKYERIDGGITGTLRQEAIDRFNAPGAQQFVFLLSTRAGGLGINLATADTVIIYDSDWNPHNDIQAFSRAHRIGQANKVMIYRFVTRNSVEERVTQVAKRKMMLTHLVVRPGMGGKGANFTKQELDDILRFGTEDLFKEDDKEEAIHYDDKAVAELLDRTNRGIEEKESWANEYLSSFKVASYATKEEEEEEETEIIKQDAENSDPAYWVKLLRHHYEQHQEDVGRSLGKGKRVRKQVNYTDGGVVAADTTRDDSNWQDNGSEYNSEYSAGSDEDGGDDDFDDQNGAERKAKRRLERRDDRPLPPLLARVGGNIEVLGFNARQRKSFLNAIMRYGMPPQDAFNSQWLVRDLRGKSERNFKAYVSLFMRHLCEPGADNAETFADGVPREGLSRQHVLTRIGVMSLIRKKVQEFEHINGYYSMPELILKPCEPVRSALKQDVAALEAPPTGGNVDKSATTSNSVTPATSAAPSPAPASEKGEDKDKDSEKEKDKTSAEKSEVKQEQEAEEDKKPGDVKQENPVEEAAGDTKPSDAEVKTEVAKTEPKEETKDPEVKEEPKTEEKEKEKVDDKKPIPPTTVIDDDDDDVMIVKEDGELEKPSASSPKDQKAVAAATSAATGATGKGAEDSLEVLKRKFMFNIADGGFTELHTLWLNEEKAAVPGREYEIWHRRHDYWLLAGIVTHGYGRWQDIQNDIRFAIINEPFKMDVGKGNFLEIKNKFLARRFKLLEQALVIEEQLRRAAYLNLAQDPSHPAMSLNARFAEVECLAESHQHLSKESLAGNKPANAVLHKVLNQLEELLSDMKSDVSRLPATLARIPPVAQRLQMSERSILSRLAATAGNASNAAQLMAQFPAGFQGTTLPAFTSGPAGNFANFRPQFSVPGQLSNNSGV.

A compositionally biased stretch (acidic residues) spans 1–19; sequence MASEEENDDNFQEEEEAQE. 3 disordered regions span residues 1-125, 192-348, and 354-373; these read MASE…PSVE, IQQE…KAKT, and FKKK…EDGE. Residues 52 to 62 show a composition bias toward basic residues; sequence RKKKGKKRKTR. A phosphoserine mark is found at serine 79 and serine 83. Residues 104–116 show a composition bias toward basic and acidic residues; that stretch reads RKEEKQAAKEKES. Phosphoserine is present on residues serine 201, serine 204, serine 210, and serine 221. Residues 218 to 232 are compositionally biased toward basic and acidic residues; that stretch reads EPRSSRSSRNEKPDD. Residues 233-247 are compositionally biased toward acidic residues; it reads IYEEAVEEEEEEEEE. Basic residues predominate over residues 251 to 266; the sequence is PRRKRSGRGKKGRRPS. Serine 284, serine 285, serine 292, serine 295, serine 299, serine 310, and serine 313 each carry phosphoserine. The segment covering 295–319 has biased composition (basic and acidic residues); that stretch reads SERDSDLEFERMLQKSDDSADEKEA. Residues 354–364 are compositionally biased toward basic residues; it reads FKKKNKLKKTK. 2 PHD-type zinc fingers span residues 377–424 and 437–484; these read QDYC…CEAD and QEFC…CSCP. Chromo domains follow at residues 488 to 566 and 612 to 673; these read GKAE…PPKF and LIVQ…SETT. The segment at 671-712 is disordered; the sequence is ETTQSRSKKSKKGRKSKLKVEDDEDRPVKHYTPPPEKPTTDL. Positions 676–687 are enriched in basic residues; sequence RSKKSKKGRKSK. Tyrosine 701 is subject to Phosphotyrosine. Phosphothreonine is present on threonine 702. Residues 742-924 enclose the Helicase ATP-binding domain; the sequence is RYSWGQGIDT…FHLLNFLSRD (183 aa). 755–762 contacts ATP; the sequence is DEMGLGKT. The short motif at 875–878 is the DEAH box element; the sequence is DEAH. In terms of domain architecture, Helicase C-terminal spans 1056-1218; it reads LLSKMLKQLK…GANFTKQELD (163 aa). 2 disordered regions span residues 1331–1396 and 1536–1715; these read NYTD…RPLP and EAPP…TGKG. A compositionally biased stretch (polar residues) spans 1349-1361; sequence WQDNGSEYNSEYS. Residues 1364–1377 are compositionally biased toward acidic residues; that stretch reads SDEDGGDDDFDDQN. Residues 1547–1568 are compositionally biased toward low complexity; sequence SATTSNSVTPATSAAPSPAPAS. Composition is skewed to basic and acidic residues over residues 1569–1611, 1621–1664, and 1679–1689; these read EKGE…KQEN, KPSD…DKKP, and MIVKEDGELEK. 2 positions are modified to phosphoserine: serine 1691 and serine 1694. Positions 1700 to 1711 are enriched in low complexity; that stretch reads AVAAATSAATGA.

This sequence belongs to the SNF2/RAD54 helicase family. In terms of assembly, interacts with the NuRD complex member HDAC1/Rpd3.

It localises to the nucleus. The protein resides in the chromosome. It catalyses the reaction ATP + H2O = ADP + phosphate + H(+). ATPase activity is stimulated by binding to either DNA or nucleosomes. Functionally, ATP-dependent chromatin-remodeling factor which acts in nucleosome-remodeling by catalyzing ATP-dependent nucleosome mobilization. Involved in regulating transcription. Plays a vital role in development. Binds to a portion of Hunchback (HB) protein that is critical for repression of bithorax complex (BXC) genes. May also function in polycomb group (PcG) repression of Hox genes. May also act as part of the nucleosome remodeling and deacetylase complex (the NuRD complex) which participates in the remodeling of chromatin by deacetylating histones. In Drosophila melanogaster (Fruit fly), this protein is Chromodomain-helicase-DNA-binding protein Mi-2 homolog (Mi-2).